The primary structure comprises 471 residues: Coagulation factor IX (471 aa).

The N-terminal stretch at 1 to 19 is a signal peptide; that stretch reads MAKIPLILSFCLLEAFLGA. A propeptide spanning residues 20-39 is cleaved from the precursor; sequence ESTVFIENKEASTVLSRTRR. The region spanning 40-85 is the Gla domain; sequence GNSNRLEELIPGNLERECIEEKCSFEEAREVFENTEKTMEFWKIYI. Residues Asn41, Glu46, Glu47, Glu54, Glu56, Glu59, Glu60, Glu65, Glu66, and Glu69 each coordinate Ca(2+). A 4-carboxyglutamate mark is found at Glu46, Glu47, Glu54, Glu56, Glu59, Glu60, Glu65, Glu66, Glu69, Glu72, Glu75, and Glu79. Glu54 contacts Mg(2+). The cysteines at positions 57 and 62 are disulfide-linked. Glu59 provides a ligand contact to Mg(2+). Glu65 contacts Mg(2+). Glu69 serves as a coordination point for Mg(2+). Residues Glu75, Glu79, Asp86, Gly87, and Gln89 each contribute to the Ca(2+) site. The Mg(2+) site is built by Glu75 and Glu79. The 37-residue stretch at 86 to 122 folds into the EGF-like 1; calcium-binding domain; sequence DGDQCNSNPCKNGAVCKDGVSSYECMCPPGYGGRNCE. Cystine bridges form between Cys90–Cys101, Cys95–Cys110, Cys112–Cys121, Cys127–Cys138, Cys134–Cys148, Cys150–Cys163, Cys171–Cys345, Cys262–Cys278, Cys392–Cys406, and Cys417–Cys445. The O-linked (Glc...) serine glycan is linked to Ser92. Residue Asp103 participates in Ca(2+) binding. Position 103 is a (3R)-3-hydroxyaspartate (Asp103). Residue Ser107 is modified to Phosphoserine. The 42-residue stretch at 123–164 folds into the EGF-like 2 domain; it reads IDSTCATKNGGCEHFCRHDTPQKAVCSCASGYKLHEDGKSCK. Residues 186 to 235 constitute a propeptide, activation peptide; the sequence is TENTIERWNITAHDEGDAHDEALDITEPPPPPTTSAAPAKIVPITKNDTR. In terms of domain architecture, Peptidase S1 spans 236–469; sequence VVGGYDSVKG…YVKWIRETTR (234 aa). The active-site Charge relay system is the His277. The Ca(2+) site is built by Glu291, Asn293, Glu296, and Glu301. The active-site Charge relay system is the Asp325. Ser421 functions as the Charge relay system in the catalytic mechanism.

The protein belongs to the peptidase S1 family. Heterodimer of a light chain and a heavy chain; disulfide-linked. Activated by factor XIa, which excises the activation peptide. The propeptide can also be removed by snake venom protease. Activated by coagulation factor VIIa-tissue factor (F7-F3) complex in calcium-dependent manner. In terms of processing, the iron and 2-oxoglutarate dependent 3-hydroxylation of aspartate and asparagine is (R) stereospecific within EGF domains.

Its subcellular location is the secreted. It carries out the reaction Selective cleavage of Arg-|-Ile bond in factor X to form factor Xa.. Its function is as follows. Factor IX is a vitamin K-dependent plasma protein that participates in the intrinsic pathway of blood coagulation by converting factor X to its active form in the presence of Ca(2+) ions, phospholipids, and factor VIIIa. This is Coagulation factor IX (F9) from Gallus gallus (Chicken).